The primary structure comprises 379 residues: Succinyl-diaminopimelate desuccinylase (379 aa).

Residue H70 participates in Zn(2+) binding. D72 is a catalytic residue. Position 103 (D103) interacts with Zn(2+). E137 (proton acceptor) is an active-site residue. E138, E166, and H352 together coordinate Zn(2+).

This sequence belongs to the peptidase M20A family. DapE subfamily. As to quaternary structure, homodimer. It depends on Zn(2+) as a cofactor. Co(2+) is required as a cofactor.

It carries out the reaction N-succinyl-(2S,6S)-2,6-diaminopimelate + H2O = (2S,6S)-2,6-diaminopimelate + succinate. It functions in the pathway amino-acid biosynthesis; L-lysine biosynthesis via DAP pathway; LL-2,6-diaminopimelate from (S)-tetrahydrodipicolinate (succinylase route): step 3/3. Catalyzes the hydrolysis of N-succinyl-L,L-diaminopimelic acid (SDAP), forming succinate and LL-2,6-diaminopimelate (DAP), an intermediate involved in the bacterial biosynthesis of lysine and meso-diaminopimelic acid, an essential component of bacterial cell walls. The protein is Succinyl-diaminopimelate desuccinylase of Burkholderia lata (strain ATCC 17760 / DSM 23089 / LMG 22485 / NCIMB 9086 / R18194 / 383).